A 223-amino-acid polypeptide reads, in one-letter code: Glutathione S-transferase 4 (223 aa).

Ala2 is modified (blocked amino end (Ala)). Residues 4–85 (PAVKVYGWAI…HVLRKHKPEL (82 aa)) form the GST N-terminal domain. Glutathione contacts are provided by residues Ser14, 43-44 (HR), 56-57 (KV), and 69-70 (ES). The 134-residue stretch at 90–223 (RLEQTAMVDV…VGAGAPKEQE (134 aa)) folds into the GST C-terminal domain.

Belongs to the GST superfamily. Phi family. As to quaternary structure, homodimer or heterodimer of GST-I and GST-IV (=GST-II). In terms of tissue distribution, seedling roots.

It catalyses the reaction RX + glutathione = an S-substituted glutathione + a halide anion + H(+). Its function is as follows. Conjugation of reduced glutathione to a wide number of exogenous and endogenous hydrophobic electrophiles. Involved in the detoxification of certain herbicides. Most active with substrates possessing a chloroacetamide structure. Trans-cinnamic acid and 1-chloro-2,4-dinitrobenzene are not effective substrates. May play an important role in the benoxacor-mediated protection of maize from metolachlor injury. In Zea mays (Maize), this protein is Glutathione S-transferase 4 (GST4).